We begin with the raw amino-acid sequence, 496 residues long: Ankyrin repeat domain-containing protein 53 (496 aa).

Positions 1–15 (MASAGSTARRAGSGS) are enriched in low complexity. The interval 1 to 66 (MASAGSTARR…RPSEESDQTT (66 aa)) is disordered. Residues 51–60 (AESKQPRPSE) are compositionally biased toward basic and acidic residues. ANK repeat units follow at residues 105 to 135 (KGFT…PVNL), 139 to 172 (NSQT…ALNA), and 176 to 205 (NGCT…NVHA). The disordered stretch occupies residues 292-320 (LVSNTKQARATALSKTPEQRGSQCSSSFH).

As to quaternary structure, interacts with PSRC1; recruited by PSRC1 to the spindle during mitosis. Phosphorylated during mitosis.

The protein localises to the cytoplasm. The protein resides in the cytoskeleton. It is found in the spindle. It localises to the spindle pole. Its function is as follows. Required for normal progression through mitosis. Involved in chromosome alignment and cytokinesis via regulation of microtubules polymerization. The sequence is that of Ankyrin repeat domain-containing protein 53 (ANKRD53) from Macaca fascicularis (Crab-eating macaque).